Reading from the N-terminus, the 809-residue chain is uncharacterized protein (809 aa).

Residues 19–206 (HDLRLVLVAS…FTGMSAITIV (188 aa)) form the MHYT domain. Helical transmembrane passes span 23-43 (LVLVASAVCLAGCFTTFRLYS), 57-77 (LLLTGLVAGSSVWATHFIAMV), 92-112 (TLLSLMIAALFMASGFAVASA), 122-142 (GGVLIGLGVAAMHYMGMSAFV), 152-172 (ATVGMSAVLGVGGATAALLLA), 186-206 (GMLCLGIVMLHFTGMSAITIV), and 224-244 (TLAVGSITSMIILGGLGAVAI). The PAS domain occupies 254-317 (ERIRRLANAA…ADPSREDVRR (64 aa)). The GGDEF domain maps to 402–536 (ESLAVICIDL…GRGVYRFFKR (135 aa)). An EAL domain is found at 545 to 795 (RRNLARDLRQ…ALTMWTTAGD (251 aa)).

It localises to the cell membrane. This is an uncharacterized protein from Caulobacter vibrioides (strain ATCC 19089 / CIP 103742 / CB 15) (Caulobacter crescentus).